We begin with the raw amino-acid sequence, 158 residues long: MIKRGFPAVLDENTEILILGSLPSDESIRKQQYYGNPGNDFWRLVGHAIGENLQDMAYEKKLKTLKHNRIGLWDVFKAGSREGSQDSKIGDEEINDFSGLKEMVPKLRLICFNGRKAGEYEPLLRGMGYETKVLPSSSGANRRFSKNRESEWEAVFRH.

Asn-39 is a catalytic residue.

It belongs to the uracil-DNA glycosylase (UDG) superfamily. Type 6 (HDG) family.

Functionally, excises hypoxanthine, a deamination product of adenine, from double-stranded DNA. Acts on double-stranded DNA containing G/I, T/I, A/I and C/I base pairs, but not on single-stranded inosine-containing DNA. Also has minor xanthine DNA glycosylase activity. Lacks any detectable uracil-DNA glycosylase activity. This Methanosarcina acetivorans (strain ATCC 35395 / DSM 2834 / JCM 12185 / C2A) protein is Hypoxanthine DNA glycosylase.